The following is a 147-amino-acid chain: Large ribosomal subunit protein bL9 (147 aa).

The protein belongs to the bacterial ribosomal protein bL9 family.

Its function is as follows. Binds to the 23S rRNA. The polypeptide is Large ribosomal subunit protein bL9 (Flavobacterium psychrophilum (strain ATCC 49511 / DSM 21280 / CIP 103535 / JIP02/86)).